A 720-amino-acid chain; its full sequence is Viral guanylyltransferase VP3 (720 aa).

Its subcellular location is the virion. It carries out the reaction a 5'-end diphospho-ribonucleoside in mRNA + GTP + H(+) = a 5'-end (5'-triphosphoguanosine)-ribonucleoside in mRNA + diphosphate. The catalysed reaction is a 5'-end (5'-triphosphoguanosine)-ribonucleoside in mRNA + S-adenosyl-L-methionine = a 5'-end (N(7)-methyl 5'-triphosphoguanosine)-ribonucleoside in mRNA + S-adenosyl-L-homocysteine. Outer capsid protein involved in mRNA capping. Catalyzes the last 3 enzymatic activities for formation of the 5' cap structure on the viral plus-strand transcripts, namely the RNA guanylyltransferase, RNA-7N- and RNA-2'O-methyltransferase activities. The chain is Viral guanylyltransferase VP3 (Segment-3) from Banna virus (BAV).